Here is a 103-residue protein sequence, read N- to C-terminus: MYAVFQSGGKQHRVSEGQVVRLEKLEKATGETVEFDSVLMVVNGEDVKIGAPVVTGAKVVAEVVAQGRGDKIKIVKFRRRKHSRKQQGHRQWFTEVKITGIQA.

It belongs to the bacterial ribosomal protein bL21 family. As to quaternary structure, part of the 50S ribosomal subunit. Contacts protein L20.

Functionally, this protein binds to 23S rRNA in the presence of protein L20. This chain is Large ribosomal subunit protein bL21, found in Mannheimia succiniciproducens (strain KCTC 0769BP / MBEL55E).